Consider the following 181-residue polypeptide: Crossover junction endodeoxyribonuclease RuvC (181 aa).

Catalysis depends on residues D8, E67, and D139. Residues D8, E67, and D139 each coordinate Mg(2+).

The protein belongs to the RuvC family. In terms of assembly, homodimer which binds Holliday junction (HJ) DNA. The HJ becomes 2-fold symmetrical on binding to RuvC with unstacked arms; it has a different conformation from HJ DNA in complex with RuvA. In the full resolvosome a probable DNA-RuvA(4)-RuvB(12)-RuvC(2) complex forms which resolves the HJ. It depends on Mg(2+) as a cofactor.

Its subcellular location is the cytoplasm. It catalyses the reaction Endonucleolytic cleavage at a junction such as a reciprocal single-stranded crossover between two homologous DNA duplexes (Holliday junction).. The RuvA-RuvB-RuvC complex processes Holliday junction (HJ) DNA during genetic recombination and DNA repair. Endonuclease that resolves HJ intermediates. Cleaves cruciform DNA by making single-stranded nicks across the HJ at symmetrical positions within the homologous arms, yielding a 5'-phosphate and a 3'-hydroxyl group; requires a central core of homology in the junction. The consensus cleavage sequence is 5'-(A/T)TT(C/G)-3'. Cleavage occurs on the 3'-side of the TT dinucleotide at the point of strand exchange. HJ branch migration catalyzed by RuvA-RuvB allows RuvC to scan DNA until it finds its consensus sequence, where it cleaves and resolves the cruciform DNA. This chain is Crossover junction endodeoxyribonuclease RuvC, found in Acinetobacter baylyi (strain ATCC 33305 / BD413 / ADP1).